Reading from the N-terminus, the 413-residue chain is Large ribosomal subunit protein uL4 (413 aa).

Ala-2 is subject to N-acetylalanine. Lys-14 bears the N6-acetyllysine mark. Arg-97 bears the Omega-N-methylarginine mark. Lys-106 carries the N6-acetyllysine modification. Lys-239 participates in a covalent cross-link: Glycyl lysine isopeptide (Lys-Gly) (interchain with G-Cter in SUMO2). Lys-259 bears the N6-acetyllysine mark. Phosphothreonine is present on Thr-266. A phosphoserine mark is found at Ser-290 and Ser-295. Arg-300 carries the post-translational modification Citrulline. Lys-327 is covalently cross-linked (Glycyl lysine isopeptide (Lys-Gly) (interchain with G-Cter in SUMO2)). Lys-333 is subject to N6-acetyllysine. The interval Ala-355–Ala-413 is disordered. Lys-361 is subject to N6-acetyllysine; alternate. Residue Lys-361 forms a Glycyl lysine isopeptide (Lys-Gly) (interchain with G-Cter in SUMO1); alternate linkage. Ser-362 carries the post-translational modification Phosphoserine. A compositionally biased stretch (basic residues) spans Lys-370 to Val-383. A compositionally biased stretch (basic and acidic residues) spans Pro-393–Ala-413.

The protein belongs to the universal ribosomal protein uL4 family. Component of the large ribosomal subunit. May bind IPO9 with low affinity. Interacts with RBM3. In terms of processing, citrullinated by PADI4.

The protein localises to the cytoplasm. Component of the large ribosomal subunit. The ribosome is a large ribonucleoprotein complex responsible for the synthesis of proteins in the cell. This is Large ribosomal subunit protein uL4 (RPL4) from Oryctolagus cuniculus (Rabbit).